Here is a 342-residue protein sequence, read N- to C-terminus: tRNA N6-adenosine threonylcarbamoyltransferase (342 aa).

2 residues coordinate Fe cation: histidine 114 and histidine 118. Substrate-binding positions include 136–140 (LVSGG), aspartate 169, glycine 182, aspartate 186, and asparagine 275. Aspartate 301 lines the Fe cation pocket.

The protein belongs to the KAE1 / TsaD family. Fe(2+) is required as a cofactor.

Its subcellular location is the cytoplasm. It catalyses the reaction L-threonylcarbamoyladenylate + adenosine(37) in tRNA = N(6)-L-threonylcarbamoyladenosine(37) in tRNA + AMP + H(+). Functionally, required for the formation of a threonylcarbamoyl group on adenosine at position 37 (t(6)A37) in tRNAs that read codons beginning with adenine. Is involved in the transfer of the threonylcarbamoyl moiety of threonylcarbamoyl-AMP (TC-AMP) to the N6 group of A37, together with TsaE and TsaB. TsaD likely plays a direct catalytic role in this reaction. This Streptococcus pyogenes serotype M18 (strain MGAS8232) protein is tRNA N6-adenosine threonylcarbamoyltransferase.